A 197-amino-acid chain; its full sequence is Transposon Tn552 resolvase (197 aa).

The 136-residue stretch at 1 to 136 (MKIGYARVST…AGRIAARARG (136 aa)) folds into the Resolvase/invertase-type recombinase catalytic domain. The active-site O-(5'-phospho-DNA)-serine intermediate is the serine 9. Positions 163-182 (IKTIAEQWQVSRTTIYRYLN) form a DNA-binding region, H-T-H motif.

It belongs to the site-specific recombinase resolvase family.

In terms of biological role, resolvase catalyzes the resolution (a site-specific recombination) of the cointegrated replicon to yield the final transposition products. The polypeptide is Transposon Tn552 resolvase (tnpR) (Staphylococcus aureus).